A 225-amino-acid polypeptide reads, in one-letter code: Phosphoglycolate phosphatase (225 aa).

Asp11 (nucleophile) is an active-site residue. Asp11, Asp13, and Asp174 together coordinate Mg(2+).

The protein belongs to the HAD-like hydrolase superfamily. CbbY/CbbZ/Gph/YieH family. The cofactor is Mg(2+).

The enzyme catalyses 2-phosphoglycolate + H2O = glycolate + phosphate. It participates in organic acid metabolism; glycolate biosynthesis; glycolate from 2-phosphoglycolate: step 1/1. In terms of biological role, specifically catalyzes the dephosphorylation of 2-phosphoglycolate. Is involved in the dissimilation of the intracellular 2-phosphoglycolate formed during the DNA repair of 3'-phosphoglycolate ends, a major class of DNA lesions induced by oxidative stress. This chain is Phosphoglycolate phosphatase, found in Nitrosococcus oceani (strain ATCC 19707 / BCRC 17464 / JCM 30415 / NCIMB 11848 / C-107).